A 133-amino-acid polypeptide reads, in one-letter code: uncharacterized protein (133 aa).

Transmembrane regions (helical) follow at residues 5 to 27 (KLFFLVTDIGFILYWLSAGFSLI), 42 to 64 (IAWNWSFFPLDILISVTGLYSLY), 77 to 99 (ALISLVLTCCSGLQALSFWTFSS), and 103 to 125 (LVWWLFNGYLLIYPLFFIHLLLK).

The protein localises to the cell membrane. This is an uncharacterized protein from Bacillus subtilis (strain 168).